The following is a 148-amino-acid chain: MEQTFIMIKPDGVQRGLVGEIISRFEKKGFSLKALKFINVDRPFAEKHYADLSAKPFFNGLVEYIVSGPVVAMVWEGKGVVLTGRKIIGATNPLASEPGTIRGDFAIDIGRNVIHGSDAVESATKEIALWFPEGVVNWQSSLHSWIYE.

6 residues coordinate ATP: Lys-9, Phe-57, Arg-85, Thr-91, Arg-102, and Asn-112. Residue His-115 is the Pros-phosphohistidine intermediate of the active site.

Belongs to the NDK family. Mg(2+) serves as cofactor.

It carries out the reaction a 2'-deoxyribonucleoside 5'-diphosphate + ATP = a 2'-deoxyribonucleoside 5'-triphosphate + ADP. It catalyses the reaction a ribonucleoside 5'-diphosphate + ATP = a ribonucleoside 5'-triphosphate + ADP. Its function is as follows. Major role in the synthesis of nucleoside triphosphates other than ATP. The ATP gamma phosphate is transferred to the NDP beta phosphate via a ping-pong mechanism, using a phosphorylated active-site intermediate. This Mesembryanthemum crystallinum (Common ice plant) protein is Nucleoside diphosphate kinase 1 (NDKP1).